A 332-amino-acid polypeptide reads, in one-letter code: Super small secreted glycoprotein (332 aa).

The first 33 residues, 1 to 33 (MGSGYQLLQLPRERFRKTSFLVWVIILFQRAIS), serve as a signal peptide directing secretion. Asparagine 41 carries an N-linked (GlcNAc...) asparagine; by host glycan. 2 disulfides stabilise this stretch: cysteine 109–cysteine 136 and cysteine 122–cysteine 148. 5 N-linked (GlcNAc...) asparagine; by host glycosylation sites follow: asparagine 205, asparagine 229, asparagine 239, asparagine 258, and asparagine 269.

It belongs to the filoviruses glycoprotein family.

The protein localises to the secreted. This chain is Super small secreted glycoprotein (GP), found in Reston ebolavirus (strain Reston-89) (REBOV).